Reading from the N-terminus, the 463-residue chain is MPLTLLQDWCRGEHLNTRRCMLILGIPEDCGEDEFEETLQEACRHLGRYRVIGRMFRREENAQAILLELAQDIDYALLPREIPGKGGPWEVIVKPRNSDGEFLNRLNRFLEEERRTVSDMNRVLGSDTNCSAPRVTISPEFWTWAQTLGAAVQPLLEQMLYRELRVFSGNTISIPGALAFDAWLEHTTEMLQMWQVPEGEKRRRLMECLRGPALQVVSGLRASNASITVEECLAALQQVFGPVESHKIAQVKLCKAYQEAGEKVSSFVLRLEPLLQRAVENNVVSRRNVNQTRLKRVLSGATLPDKLRDKLKLMKQRRKPPGFLALVKLLREEEEWEATLGPDRESLEGLEVAPRPPARITGVGAVPLPASGNSFDARPSQGYRRRRGRGQHRRGGVARAGSRGSRKRKRHTFCYSCGEDGHIRVQCINPSNLLLVKQKKQAAVESGNGNWAWDKSHPKSKAK.

The disordered stretch occupies residues 363–410; sequence VGAVPLPASGNSFDARPSQGYRRRRGRGQHRRGGVARAGSRGSRKRKR. The segment covering 383–396 has biased composition (basic residues); that stretch reads YRRRRGRGQHRRGG. The CCHC-type zinc-finger motif lies at 412-429; the sequence is TFCYSCGEDGHIRVQCIN. Residues 440 to 463 form a disordered region; that stretch reads KQAAVESGNGNWAWDKSHPKSKAK.

Belongs to the PNMA family. In terms of tissue distribution, expressed at high levels in the brain and testis. Expressed at lower levels in the heart, trachea and kidney.

It is found in the nucleus. The protein localises to the nucleolus. The protein is Paraneoplastic antigen Ma3 (PNMA3) of Homo sapiens (Human).